We begin with the raw amino-acid sequence, 321 residues long: Tet-like dioxygenase 1 (321 aa).

Residues 198–298 form the Fe2OG dioxygenase domain; the sequence is DSYYALNNCL…RIGLVYFAHK (101 aa). 2-oxoglutarate is bound by residues asparagine 214 and arginine 224. Fe cation contacts are provided by histidine 229 and aspartate 231. Residue tyrosine 242 participates in 2-oxoglutarate binding. Residue histidine 279 coordinates Fe cation. Arginine 289 serves as a coordination point for 2-oxoglutarate. Residue glutamine 310 coordinates substrate.

Fe(2+) is required as a cofactor.

The enzyme catalyses a 5-methyl-2'-deoxycytidine in DNA + 2-oxoglutarate + O2 = a 5-hydroxymethyl-2'-deoxycytidine in DNA + succinate + CO2. The catalysed reaction is a 5-hydroxymethyl-2'-deoxycytidine in DNA + 2-oxoglutarate + O2 = a 5-formyl-2'-deoxycytidine in DNA + succinate + CO2 + H2O. It carries out the reaction a 5-formyl-2'-deoxycytidine in DNA + 2-oxoglutarate + O2 = a 5-carboxyl-2'-deoxycytidine in DNA + succinate + CO2 + H(+). Functionally, dioxygenase that catalyzes the conversion of the modified genomic base 5-methylcytosine (5mC) into 5-hydroxymethylcytosine (5hmC), and thereby plays a role in active DNA demethylation. Also mediates subsequent conversion of 5hmC into 5-formylcytosine (5fC), and conversion of 5fC to 5-carboxylcytosine (5caC). The sequence is that of Tet-like dioxygenase 1 from Naegleria gruberi (Amoeba).